The primary structure comprises 1653 residues: MRPPATPPDPTKEPGCKGTTRGLRKRGLPLTPEPGEGGGCSLEARGCEEESRQKQRMVTQASGREETEGDKLAKENGKITEAPSDDPQPGTDLVRKTSITSSESLQTVECSEFQNMAFLQSLDKEELGEGIKRRMRIKKCKSLENPPLEITKNEATQNIKVEFQDELFKNTPKHSCNSLSPGVEKNCSFELHDYSFLHSEGCNNENNFEDKPHDVCLHTEENSLKLKKENLRNLAEKDDTRTTTKLLKTEKSVIASKLLLEESHLYQNKNNGLTSCLQSEKNKYSVEENNTGRKHRKKMKSGKEEKNINLTLSNVCNNSVLVLQENQMGMEGKEAETLEPKKSFLKALRKINHNTLPPVDHLCLPKTVGKTSSRHHINAMLQKTLESSLKEDIKNTSESLGCKRIEPEKYNKSMISSTVKSPSDGHHMEKRSPRGDLRSETEESKVSCCRTIPMTGKRVWPFYSCARISAQCWKKTSLSDLNYSLLGPLENVRQHDSIIHQMNQTHLPDSKLLQPSLTERTTESSRKEMYDSDLSCLSSVSSVESTVMDIKEAMSHDKKTKLEEPSRNGAEVVSNATEDTQLSNITQSLTGNKKRKGNLSKLNLTVASQESQETNNCANKTVHRKVCITKQTLVAPDLVKILNTGRLTNFKIPLLKNKTGKRGAVSARSSEREAYSPLELLDSLSGVEAKQNRNKENICTTSGPQSLNLHSCIAPGQASSHSFYNKNSCTSSSFTKKGYDNKACNHISEPGNIISNKESISMKIENNTFSCDLGYIDQSSFCSKKQEAFVPISSEISGRKMTKSISELKLGFPDILKAYEDDVLLIDVIQDDPELFGISSEGDLSFASEVSKISQEPRVSEDQPTADFKHMHLPGKKEPGDLSKEVALLDPGLLKLESCPSLSAAKEPQHDPEGAAISLEATEETVVSGSLEGLSEQARASDSDAKCISSDKATVMEEQESTHEIFKSKDSRNVESATECQLATLGPNPLCSSALPVNLSSHQDVVSTPWINDVRFPGRHSVLQLQNPETCEIFKREKNMGVFQKPLGLLIPHRYCKLHFNTLRGCERAQCKFVHVPEQGDEKICMDVFRKYISVNEQRLLHRAAYIFLEYYRKFPPGIHFSLQVLNDLLISLLKHCLLKEVFQVVQLSIMAKMLPALKILLKIFEYVAAMKLRNAVPALIEIFCKFIEAGMVPDPEHLNYIVKLLHQAQASQQEISAVLQAKSRLRVRQLKKNWKCDLDSALSEVETCKEKSDWTKLGNLYISIKMSCEEFADLQRFCACVAETLTEDYKEERPGVPFCEFAETVSKDPQYSEVDKTLLGRIGISAVYFYHRLLLWAKGRKVLDILYELKIHFTSLKGLTGPEKEAPRCQIVNVAAEIFIKSGSLDGAIWVLRESEWIINTPLWPCDRMDVLNRHNLLCTIAHEILGKNLYKQTFEVLRNLPSFQNSQEMMGVSQSSLLFNELLDACIESNSLGISSSVAEFMVAKSIPIDFSFLRRLITSLGRSCLWLKARAHYKSALSLGCYPPLEGNLHRKLLLVPSYLSEIEMLLAMEIFLVSNASGIQSAGMGAPTQVLQIVLKRCEESKSRSKDEYQAAVERLVMAARISDPKLFIKHMTVNINKEQVYSLEHCSALKWLKENMKWAGKVWLFTNH.

Disordered stretches follow at residues 1 to 94 (MRPP…TDLV), 284 to 303 (YSVE…KSGK), and 415 to 442 (ISST…SETE). The span at 63-78 (GREETEGDKLAKENGK) shows a compositional bias: basic and acidic residues. Residues 423-442 (SDGHHMEKRSPRGDLRSETE) are compositionally biased toward basic and acidic residues.

Restricted to testis, where it localizes to germ cells.

It is found in the cytoplasm. It localises to the cytosol. Functionally, important for normal spermatogenesis and male fertility. Specifically required for progression to the post-meiotic stages of spermatocyte development. Seems to be necessary for normal expression levels of a number of testis-expressed gene transcripts, although its role in this process is unclear. This Mus musculus (Mouse) protein is Protein TOPAZ1.